We begin with the raw amino-acid sequence, 180 residues long: MTLKELLVGFGTQVRSIWMIGLHAFAKRETRMYPEEPIYLPPRYRGRIVLTRDPDGEERCVACNLCAVACPVGCISLQKAETKDGRWYPEFFRINFSRCIFCGLCEEACPTTAIQLTPDFEMGEYKRQDLVYEKEDLLISGPGKYPEYNFYRMAGMAIDGKDKGEAENEAKPIDVKSLLP.

2 consecutive 4Fe-4S ferredoxin-type domains span residues 50–80 (LTRD…LQKA) and 90–119 (EFFR…LTPD). Cys-60, Cys-63, Cys-66, Cys-70, Cys-99, Cys-102, Cys-105, and Cys-109 together coordinate [4Fe-4S] cluster.

This sequence belongs to the complex I 23 kDa subunit family. In terms of assembly, NDH-1 is composed of 13 different subunits. Subunits NuoA, H, J, K, L, M, N constitute the membrane sector of the complex. The cofactor is [4Fe-4S] cluster.

It localises to the cell inner membrane. It carries out the reaction a quinone + NADH + 5 H(+)(in) = a quinol + NAD(+) + 4 H(+)(out). Functionally, NDH-1 shuttles electrons from NADH, via FMN and iron-sulfur (Fe-S) centers, to quinones in the respiratory chain. The immediate electron acceptor for the enzyme in this species is believed to be ubiquinone. Couples the redox reaction to proton translocation (for every two electrons transferred, four hydrogen ions are translocated across the cytoplasmic membrane), and thus conserves the redox energy in a proton gradient. This Shigella sonnei (strain Ss046) protein is NADH-quinone oxidoreductase subunit I.